The sequence spans 108 residues: Peptidyl-prolyl cis-trans isomerase FKBP1A (108 aa).

At Ser10 the chain carries Phosphoserine. One can recognise a PPIase FKBP-type domain in the interval 20–108 (GQTCVVHYTG…VFDVELLKLE (89 aa)). At Lys53 the chain carries N6-acetyllysine; alternate. Lys53 bears the N6-succinyllysine; alternate mark.

Belongs to the FKBP-type PPIase family. FKBP1 subfamily. As to quaternary structure, interacts with TGFBR1; prevents TGFBR1 phosphorylation by TGFBR2 and stabilizes it in the inactive conformation. Interacts with ACVR1B and SMAD7. Identified in a complex composed of RYR1, PDE4D, PKA, FKBP1A and protein phosphatase 1 (PP1). Interacts directly with RYR2. Interacts directly with RYR3. Interacts directly with RYR1. Interacts with GLMN; rapamycin and FK506 abolish the interaction with GLMN in a dose dependent manner. Ubiquitous.

The protein resides in the cytoplasm. Its subcellular location is the cytosol. The protein localises to the sarcoplasmic reticulum membrane. It carries out the reaction [protein]-peptidylproline (omega=180) = [protein]-peptidylproline (omega=0). With respect to regulation, inhibited by both FK506 and rapamycin. Functionally, keeps in an inactive conformation TGFBR1, the TGF-beta type I serine/threonine kinase receptor, preventing TGF-beta receptor activation in absence of ligand. Recruits SMAD7 to ACVR1B which prevents the association of SMAD2 and SMAD3 with the activin receptor complex, thereby blocking the activin signal. May modulate the RYR1 calcium channel activity. PPIases accelerate the folding of proteins. It catalyzes the cis-trans isomerization of proline imidic peptide bonds in oligopeptides. This is Peptidyl-prolyl cis-trans isomerase FKBP1A (Fkbp1a) from Rattus norvegicus (Rat).